The primary structure comprises 242 residues: Uridylate kinase (242 aa).

Position 12–15 (12–15) interacts with ATP; the sequence is KLSG. The involved in allosteric activation by GTP stretch occupies residues 20-25; sequence GNDGFG. Gly-54 contributes to the UMP binding site. ATP is bound by residues Gly-55 and Arg-59. Residues Asp-74 and 135–142 each bind UMP; that span reads TGNPYFST. Residues Asn-163, Tyr-169, and Asp-172 each contribute to the ATP site.

This sequence belongs to the UMP kinase family. As to quaternary structure, homohexamer.

The protein resides in the cytoplasm. The enzyme catalyses UMP + ATP = UDP + ADP. Its pathway is pyrimidine metabolism; CTP biosynthesis via de novo pathway; UDP from UMP (UMPK route): step 1/1. Its activity is regulated as follows. Allosterically activated by GTP. Inhibited by UTP. In terms of biological role, catalyzes the reversible phosphorylation of UMP to UDP. This Listeria innocua serovar 6a (strain ATCC BAA-680 / CLIP 11262) protein is Uridylate kinase.